Reading from the N-terminus, the 348-residue chain is tRNA N6-adenosine threonylcarbamoyltransferase (348 aa).

The Fe cation site is built by H116 and H120. Residues 138-142 (QVSGG), D171, G184, D188, and N277 each bind substrate. D309 contacts Fe cation.

It belongs to the KAE1 / TsaD family. The cofactor is Fe(2+).

The protein resides in the cytoplasm. The enzyme catalyses L-threonylcarbamoyladenylate + adenosine(37) in tRNA = N(6)-L-threonylcarbamoyladenosine(37) in tRNA + AMP + H(+). Functionally, required for the formation of a threonylcarbamoyl group on adenosine at position 37 (t(6)A37) in tRNAs that read codons beginning with adenine. Is involved in the transfer of the threonylcarbamoyl moiety of threonylcarbamoyl-AMP (TC-AMP) to the N6 group of A37, together with TsaE and TsaB. TsaD likely plays a direct catalytic role in this reaction. The sequence is that of tRNA N6-adenosine threonylcarbamoyltransferase from Lactobacillus gasseri (strain ATCC 33323 / DSM 20243 / BCRC 14619 / CIP 102991 / JCM 1131 / KCTC 3163 / NCIMB 11718 / NCTC 13722 / AM63).